The sequence spans 354 residues: Elongation factor Ts, mitochondrial (354 aa).

Residues 1–47 (MMRSTLSLLQKCRLPNNNGSLLSFKNNQVVNQTALFSMKSNQQYRFY) constitute a mitochondrion transit peptide.

The protein belongs to the EF-Ts family.

Its subcellular location is the mitochondrion. Its function is as follows. Associates with the EF-Tu.GDP complex and induces the exchange of GDP to GTP. It remains bound to the aminoacyl-tRNA.EF-Tu.GTP complex up to the GTP hydrolysis stage on the ribosome. This is Elongation factor Ts, mitochondrial (tsfm) from Heterostelium pallidum (strain ATCC 26659 / Pp 5 / PN500) (Cellular slime mold).